Consider the following 120-residue polypeptide: Large ribosomal subunit protein bL20 (120 aa).

This sequence belongs to the bacterial ribosomal protein bL20 family.

Binds directly to 23S ribosomal RNA and is necessary for the in vitro assembly process of the 50S ribosomal subunit. It is not involved in the protein synthesizing functions of that subunit. This is Large ribosomal subunit protein bL20 from Mesoplasma florum (strain ATCC 33453 / NBRC 100688 / NCTC 11704 / L1) (Acholeplasma florum).